Consider the following 703-residue polypeptide: Elongation factor G (703 aa).

The tr-type G domain maps to 8–290 (ARYRNIGICA…AVIEYLPAPT (283 aa)). GTP-binding positions include 17-24 (AHVDAGKT), 88-92 (DTPGH), and 142-145 (NKMD).

Belongs to the TRAFAC class translation factor GTPase superfamily. Classic translation factor GTPase family. EF-G/EF-2 subfamily.

It localises to the cytoplasm. Its function is as follows. Catalyzes the GTP-dependent ribosomal translocation step during translation elongation. During this step, the ribosome changes from the pre-translocational (PRE) to the post-translocational (POST) state as the newly formed A-site-bound peptidyl-tRNA and P-site-bound deacylated tRNA move to the P and E sites, respectively. Catalyzes the coordinated movement of the two tRNA molecules, the mRNA and conformational changes in the ribosome. This Teredinibacter turnerae (strain ATCC 39867 / T7901) protein is Elongation factor G.